The sequence spans 308 residues: Cap-specific mRNA (nucleoside-2'-O-)-methyltransferase (308 aa).

An mRNA-binding site is contributed by tyrosine 30. The S-adenosyl-L-methionine site is built by glutamine 46, tyrosine 74, glycine 76, glycine 80, aspartate 103, arginine 105, valine 124, and aspartate 147. Residues 177-257 (PIASSLKWRC…NTKIRPKIVL (81 aa)) form a binding to NPH-I region. Lysine 183 serves as the catalytic For methyltransferase activity. MRNA contacts are provided by residues 185–188 (RCPF), aspartate 190, 213–215 (SAE), and glutamate 241.

Belongs to the class I-like SAM-binding methyltransferase superfamily. Poxvirus/kinetoplastid 2'-O-MTase family. Interacts with poly(A) polymerase catalytic subunit OPG063. Interacts with OPG109 and OPG123; these interactions might help linking transcription to capping and polyadenylation.

It localises to the virion. The enzyme catalyses a 5'-end (N(7)-methyl 5'-triphosphoguanosine)-ribonucleoside in mRNA + S-adenosyl-L-methionine = a 5'-end (N(7)-methyl 5'-triphosphoguanosine)-(2'-O-methyl-ribonucleoside) in mRNA + S-adenosyl-L-homocysteine + H(+). Displays methyltransferase, positive regulation of the poly(A) polymerase and transcription elongation activities. Involved in the modification of both mRNA ends and in intermediate and late gene positive transcription elongation. At the mRNAs 5' end, methylates the ribose 2' OH group of the first transcribed nucleotide, thereby producing a 2'-O-methylpurine cap. At the 3' end, functions as a processivity factor which stimulates the activity of the viral poly(A) polymerase OPG063 that creates mRNA's poly(A) tail. In the presence of OPG102, OPG063 does not dissociate from the RNA allowing tail elongation to around 250 adenylates. This Fowlpox virus (strain NVSL) (FPV) protein is Cap-specific mRNA (nucleoside-2'-O-)-methyltransferase (OPG102).